A 163-amino-acid polypeptide reads, in one-letter code: Auxin-responsive protein IAA5 (163 aa).

An EAR-like (transcriptional repression) motif is present at residues 15 to 19 (LRLGL). Residues 74-160 (SSYVKVSVDG…KRLRIMKRSC (87 aa)) enclose the PB1 domain.

This sequence belongs to the Aux/IAA family. As to quaternary structure, homodimers and heterodimers. Highly expressed in stems and flowers.

It is found in the nucleus. Its function is as follows. Aux/IAA proteins are short-lived transcriptional factors that function as repressors of early auxin response genes at low auxin concentrations. Repression is thought to result from the interaction with auxin response factors (ARFs), proteins that bind to the auxin-responsive promoter element (AuxRE). Formation of heterodimers with ARF proteins may alter their ability to modulate early auxin response genes expression. The protein is Auxin-responsive protein IAA5 (IAA5) of Arabidopsis thaliana (Mouse-ear cress).